The sequence spans 156 residues: Small ribosomal subunit protein uS11 (156 aa).

The segment at 1 to 27 (MSEKEQKEVEAKESSGKAEERRETREK) is disordered.

It belongs to the universal ribosomal protein uS11 family. In terms of assembly, part of the 30S ribosomal subunit.

Its function is as follows. Located on the platform of the 30S subunit. In Thermofilum pendens (strain DSM 2475 / Hrk 5), this protein is Small ribosomal subunit protein uS11.